The chain runs to 391 residues: Cathepsin E (391 aa).

Positions 1 to 19 are cleaved as a signal peptide; that stretch reads MKTFLLLLLVLLELGQAPG. Residues 20–53 constitute a propeptide, activation peptide; the sequence is ALHRVPLSRRESLRKKLRAQGQLTELWKSQNLNM. Residues 74–387 enclose the Peptidase A1 domain; sequence YFGTISIGSP…DRGNNRVGLA (314 aa). N86 carries an N-linked (GlcNAc...) asparagine glycan. D92 is an active-site residue. 2 cysteine pairs are disulfide-bonded: C105-C110 and C267-C271. The active site involves D276. The cysteines at positions 309 and 346 are disulfide-linked.

Belongs to the peptidase A1 family. In terms of assembly, homodimer; disulfide-linked. Glycosylated. The nature of the carbohydrate chain varies between cell types. In terms of tissue distribution, expressed abundantly in the surface and foveolar epithelial cells of the fundic and pyloric stomach mucosa, and at very low levels in the spleen.

Its subcellular location is the endosome. It catalyses the reaction Similar to cathepsin D, but slightly broader specificity.. Its function is as follows. May have a role in immune function. Probably involved in the processing of antigenic peptides during MHC class II-mediated antigen presentation. May play a role in activation-induced lymphocyte depletion in the thymus, and in neuronal degeneration and glial cell activation in the brain. This chain is Cathepsin E (CTSE), found in Cavia porcellus (Guinea pig).